The sequence spans 248 residues: Type II restriction enzyme XhoI (248 aa).

It belongs to the XhoI type II restriction endonuclease family.

It catalyses the reaction Endonucleolytic cleavage of DNA to give specific double-stranded fragments with terminal 5'-phosphates.. Its function is as follows. A P subtype restriction enzyme that recognizes the double-stranded sequence 5'-CTCGAG-3' and cleaves after C-1. This Xanthomonas vasicola protein is Type II restriction enzyme XhoI.